A 354-amino-acid polypeptide reads, in one-letter code: Protein-glutamate methylesterase/protein-glutamine glutaminase 2 (354 aa).

The Response regulatory domain occupies Arg3–Asp120. At Asp54 the chain carries 4-aspartylphosphate. Residues Ala164–Gln354 enclose the CheB-type methylesterase domain. Active-site residues include Ser176, His202, and Asp298.

Belongs to the CheB family. In terms of processing, phosphorylated by CheA. Phosphorylation of the N-terminal regulatory domain activates the methylesterase activity.

It is found in the cytoplasm. The enzyme catalyses [protein]-L-glutamate 5-O-methyl ester + H2O = L-glutamyl-[protein] + methanol + H(+). It carries out the reaction L-glutaminyl-[protein] + H2O = L-glutamyl-[protein] + NH4(+). Its function is as follows. Involved in chemotaxis. Part of a chemotaxis signal transduction system that modulates chemotaxis in response to various stimuli. Catalyzes the demethylation of specific methylglutamate residues introduced into the chemoreceptors (methyl-accepting chemotaxis proteins or MCP) by CheR. Also mediates the irreversible deamidation of specific glutamine residues to glutamic acid. The protein is Protein-glutamate methylesterase/protein-glutamine glutaminase 2 of Burkholderia thailandensis (strain ATCC 700388 / DSM 13276 / CCUG 48851 / CIP 106301 / E264).